A 325-amino-acid chain; its full sequence is Bifunctional ligase/repressor BirA (325 aa).

Positions 23–42 form a DNA-binding region, H-T-H motif; the sequence is GQKISDALGCSRTAVWKHIE. The region spanning 74–262 is the BPL/LPL catalytic domain; it reads RFGLKTEVMG…CFEKRYRDYM (189 aa). Residues Gln-118, 122 to 124, and Lys-189 contribute to the biotin site; that span reads RGR.

It belongs to the biotin--protein ligase family.

It catalyses the reaction biotin + L-lysyl-[protein] + ATP = N(6)-biotinyl-L-lysyl-[protein] + AMP + diphosphate + H(+). Functionally, acts both as a biotin--[acetyl-CoA-carboxylase] ligase and a repressor. The chain is Bifunctional ligase/repressor BirA from Bacillus subtilis (strain 168).